Consider the following 217-residue polypeptide: Probable GTP-binding protein EngB (217 aa).

Residues 24-207 (SQPEICFAGR…HALIESWLIP (184 aa)) enclose the EngB-type G domain. Residues 32 to 39 (GRSNAGKS), 59 to 63 (GRTQH), 81 to 84 (DLPG), 148 to 151 (TKCD), and 185 to 188 (LFSA) contribute to the GTP site. Mg(2+) is bound by residues S39 and T61.

This sequence belongs to the TRAFAC class TrmE-Era-EngA-EngB-Septin-like GTPase superfamily. EngB GTPase family. Mg(2+) serves as cofactor.

In terms of biological role, necessary for normal cell division and for the maintenance of normal septation. This is Probable GTP-binding protein EngB from Paraburkholderia xenovorans (strain LB400).